We begin with the raw amino-acid sequence, 351 residues long: Dihydroorotate dehydrogenase (quinone) (351 aa).

FMN contacts are provided by residues 67-71 (AGFDK) and Thr-91. Lys-71 provides a ligand contact to substrate. Residue 116–120 (NAMGF) participates in substrate binding. Residues Asn-145 and Asn-178 each coordinate FMN. Position 178 (Asn-178) interacts with substrate. Residue Ser-181 is the Nucleophile of the active site. Asn-183 is a binding site for substrate. 2 residues coordinate FMN: Lys-214 and Thr-242. Substrate is bound at residue 243-244 (NT). Residues Gly-262, Gly-291, and 312 to 313 (YS) each bind FMN.

It belongs to the dihydroorotate dehydrogenase family. Type 2 subfamily. Monomer. Requires FMN as cofactor.

The protein resides in the cell membrane. The catalysed reaction is (S)-dihydroorotate + a quinone = orotate + a quinol. It functions in the pathway pyrimidine metabolism; UMP biosynthesis via de novo pathway; orotate from (S)-dihydroorotate (quinone route): step 1/1. Catalyzes the conversion of dihydroorotate to orotate with quinone as electron acceptor. This chain is Dihydroorotate dehydrogenase (quinone), found in Helicobacter pylori (strain Shi470).